Consider the following 364-residue polypeptide: MRKPDKDADRLTTLDLARSGEVRDISAMELVGEMKTGWNLGNSLDATGAPGNASEVNWGNPKTTKEMIDAVYNKGFDVIRIPVTWGGHVGDAPDYKIDDEWIARVQEVVNYAYDDGAYVIINSHHEEDWRIPDNEHIDAVDEKTAAIWKQVAERFKDYGDHLIFEGLNEPRVKGSPQEWNGGTEEGRRCVDRLNKTFLDTVRATGGNNEKRLLLMTTYASSSMSNVIKDTAIPEDDHIGFSIHAYTPYAFTYNANADWELFHWDDSHDGELVSLMTNLKENYLDKDIPVIITEYGAVNKDNNDEDRAKWVSSYIEYAELLGGIPCVWWDNGYYSSGNELFGIFDRNTCTWFTDTVTDAIIENAK.

Residue Glu169 is the Proton donor of the active site. Glu293 serves as the catalytic Nucleophile.

It belongs to the glycosyl hydrolase 5 (cellulase A) family.

The protein localises to the cytoplasm. It catalyses the reaction Endohydrolysis of (1-&gt;4)-beta-D-glucosidic linkages in cellulose, lichenin and cereal beta-D-glucans.. The catalysed reaction is Endohydrolysis of (1-&gt;4)-beta-D-xylosidic linkages in xylans.. Functionally, hydrolyzes both carboxymethylcellulose and xylan. Probably has a role in hydrolyzing oligosaccharides derived from cellulose, which are transported across the cell wall. This Ruminococcus albus protein is Endoglucanase A (celA).